The following is a 309-amino-acid chain: HTH-type transcriptional activator AaeR (309 aa).

An HTH lysR-type domain is found at 1 to 59 (MERLKRMSVFAKVVEFGSFTAAARQLQMSVSSISQTVSKLEDELQVKLLNRSTRSIGLT). Residues 19–38 (FTAAARQLQMSVSSISQTVS) constitute a DNA-binding region (H-T-H motif).

The protein belongs to the LysR transcriptional regulatory family.

Its activity is regulated as follows. Activity is regulated by p-hydroxybenzoic acid. Transcriptional regulator that activates expression of the aaeXAB operon, which is involved in the efflux of aromatic carboxylic acids such as p-hydroxybenzoic acid (pHBA). In the presence of the effector pHBA, acts by binding to a single target within the aaeXAB-aaeR intergenic region. In the absence of pHBA, binds more than 50 sites along the E.coli K12 genome, including genes related to biofilm formation and several genes involved in stress response, suggesting that it might play a role in quorum sensing in the absence of pHBA. This Escherichia coli (strain K12) protein is HTH-type transcriptional activator AaeR.